A 132-amino-acid polypeptide reads, in one-letter code: Profilin (132 aa).

This sequence belongs to the profilin family. In terms of assembly, occurs in many kinds of cells as a complex with monomeric actin in a 1:1 ratio.

It is found in the cytoplasm. Its subcellular location is the cytoskeleton. In terms of biological role, binds to actin and affects the structure of the cytoskeleton. At high concentrations, profilin prevents the polymerization of actin, whereas it enhances it at low concentrations. By binding to PIP2, it inhibits the formation of IP3 and DG. The protein is Profilin of Naegleria pringsheimi (Amoeba).